Consider the following 174-residue polypeptide: Adenine phosphoribosyltransferase (174 aa).

The protein belongs to the purine/pyrimidine phosphoribosyltransferase family. As to quaternary structure, homodimer.

The protein localises to the cytoplasm. It catalyses the reaction AMP + diphosphate = 5-phospho-alpha-D-ribose 1-diphosphate + adenine. It functions in the pathway purine metabolism; AMP biosynthesis via salvage pathway; AMP from adenine: step 1/1. Functionally, catalyzes a salvage reaction resulting in the formation of AMP, that is energically less costly than de novo synthesis. The sequence is that of Adenine phosphoribosyltransferase from Agathobacter rectalis (strain ATCC 33656 / DSM 3377 / JCM 17463 / KCTC 5835 / VPI 0990) (Eubacterium rectale).